Consider the following 414-residue polypeptide: Glucose-1-phosphate adenylyltransferase (414 aa).

Residues Tyr-103, Gly-168, 183 to 184 (EK), and Ser-201 each bind alpha-D-glucose 1-phosphate.

Belongs to the bacterial/plant glucose-1-phosphate adenylyltransferase family. Homotetramer.

The enzyme catalyses alpha-D-glucose 1-phosphate + ATP + H(+) = ADP-alpha-D-glucose + diphosphate. Its pathway is glycan biosynthesis; glycogen biosynthesis. Its function is as follows. Involved in the biosynthesis of ADP-glucose, a building block required for the elongation reactions to produce glycogen. Catalyzes the reaction between ATP and alpha-D-glucose 1-phosphate (G1P) to produce pyrophosphate and ADP-Glc. The polypeptide is Glucose-1-phosphate adenylyltransferase (Thermus caldophilus).